Reading from the N-terminus, the 57-residue chain is MKTPTDLTSYIRVLKLASTPTWDEFSKVATIAGLGILLVGFIGFVIFSIMTFVPGGP.

The helical transmembrane segment at 33 to 53 (GLGILLVGFIGFVIFSIMTFV) threads the bilayer.

The protein belongs to the SecE/SEC61-gamma family. Component of the Sec protein translocase complex. Heterotrimer consisting of SecY (alpha), SecG (beta) and SecE (gamma) subunits. The heterotrimers can form oligomers, although 1 heterotrimer is thought to be able to translocate proteins. Interacts with the ribosome. May interact with SecDF, and other proteins may be involved.

It is found in the cell membrane. Functionally, essential subunit of the Sec protein translocation channel SecYEG. Clamps together the 2 halves of SecY. May contact the channel plug during translocation. The chain is Protein translocase subunit SecE from Natronomonas pharaonis (strain ATCC 35678 / DSM 2160 / CIP 103997 / JCM 8858 / NBRC 14720 / NCIMB 2260 / Gabara) (Halobacterium pharaonis).